Here is a 398-residue protein sequence, read N- to C-terminus: MENILNDINKRFISLPEEDVRGNKQILESVLRTFVEQMKTQDPLFKALFRRVFYGGSFYDGLKVGKPEEFDLDILLHIPIYAQPVLNESNVPGFVWLKLNNLDGWLRQPEGRVYKDFRKKFLADNDFLDTGKTLRWMESLVQKTLNTLPWVNNATCELTNEFGTFHINWWKGGPAMTLGISHSSGEKIMDVDLVACFVFSGDKWPINGYRSNPFPSTKPEFFIVPKKPQGPVNPQGRYWSLSFQEQERVLIDNKNRLKPAVKLIKKLKEKTHPNIASYYIKTVFLHIIEQKDQSFWNKSLREVFMTTLREYNEFIADQSIPYYWCRKNNLIGHLAPITLNNISNRIGYIIKDIENNPENIAKHLLTKEEYTKYIQGEDVMAEALPALPASQTSSCVII.

ATP-binding positions include Ser-57 and 69-71 (EFD). 3 residues coordinate Mg(2+): Glu-69, Asp-71, and Asp-192. Residues Asp-192 and 240–247 (SLSFQEQE) each bind GTP. ATP-binding positions include 244–247 (QEQE), Lys-265, and 277–281 (SYYIK). Mn(2+) contacts are provided by Ile-288, Glu-289, and Asp-292.

The protein belongs to the mab-21 family. Mg(2+) is required as a cofactor. Requires Mn(2+) as cofactor.

The catalysed reaction is GTP + ATP = 2',3'-cGAMP + 2 diphosphate. It catalyses the reaction GTP + ATP = pppGp(2'-5')A + diphosphate. The enzyme catalyses pppGp(2'-5')A = 2',3'-cGAMP + diphosphate. The enzyme activity is specifically activated by double-stranded RNA (dsRNA). Nucleotidyltransferase that catalyzes the formation of cyclic GMP-AMP (2',3'-cGAMP) from ATP and GTP and plays a key role in innate immunity. Acts as a key sensor of double-stranded RNA (dsRNA), the presence of dsRNA in the cytoplasm being a danger signal that triggers the immune responses. Directly binds dsRNA, activating the nucleotidyltransferase activity, leading to synthesis of 2',3'-cGAMP, a second messenger that binds to and activates Sting, thereby triggering the antiviral immune response via activation of the NF-kappa-B transcription factor Rel (Relish). The sequence is that of Cyclic GMP-AMP synthase-like receptor from Tribolium castaneum (Red flour beetle).